The chain runs to 379 residues: 1-deoxy-D-xylulose 5-phosphate reductoisomerase (379 aa).

NADPH-binding residues include Thr10, Gly11, Ser12, Ile13, Arg38, Asn39, and Asn121. Lys122 contributes to the 1-deoxy-D-xylulose 5-phosphate binding site. Glu123 provides a ligand contact to NADPH. A Mn(2+)-binding site is contributed by Asp147. The 1-deoxy-D-xylulose 5-phosphate site is built by Ser148, Glu149, Ser173, and His196. Residue Glu149 participates in Mn(2+) binding. NADPH is bound at residue Gly202. Positions 209, 214, 215, and 218 each coordinate 1-deoxy-D-xylulose 5-phosphate. Glu218 contributes to the Mn(2+) binding site.

The protein belongs to the DXR family. Requires Mg(2+) as cofactor. It depends on Mn(2+) as a cofactor.

It carries out the reaction 2-C-methyl-D-erythritol 4-phosphate + NADP(+) = 1-deoxy-D-xylulose 5-phosphate + NADPH + H(+). The protein operates within isoprenoid biosynthesis; isopentenyl diphosphate biosynthesis via DXP pathway; isopentenyl diphosphate from 1-deoxy-D-xylulose 5-phosphate: step 1/6. Catalyzes the NADPH-dependent rearrangement and reduction of 1-deoxy-D-xylulose-5-phosphate (DXP) to 2-C-methyl-D-erythritol 4-phosphate (MEP). The sequence is that of 1-deoxy-D-xylulose 5-phosphate reductoisomerase from Chlamydia muridarum (strain MoPn / Nigg).